We begin with the raw amino-acid sequence, 390 residues long: Curcumin synthase 3 (390 aa).

Cysteine 164 is an active-site residue.

It belongs to the thiolase-like superfamily. Chalcone/stilbene synthases family. Homodimer.

The enzyme catalyses (E)-feruloylacetyl-CoA + (E)-feruloyl-CoA + H2O = curcumin + CO2 + 2 CoA. It catalyses the reaction (E)-feruloylacetyl-CoA + (E)-4-coumaroyl-CoA + H2O = demethoxycurcumin + CO2 + 2 CoA. It carries out the reaction (4-coumaroyl)acetyl-CoA + 4-coumaroyl-CoA + H2O = bisdemethoxycurcumin + CO2 + 2 CoA. It functions in the pathway secondary metabolite biosynthesis; flavonoid biosynthesis. Functionally, catalyzes the synthesis of curcumin by condensing feruloyl-CoA with a diketide-CoA in the curcuminoid biosynthesis. Also acts as a demethoxycurcumin synthase by accepting 4-coumaroyl-CoA as a starter substrate instead of feruloyl-CoA. The protein is Curcumin synthase 3 (CURS3) of Curcuma longa (Turmeric).